A 1371-amino-acid polypeptide reads, in one-letter code: Soluble scavenger receptor cysteine-rich domain-containing protein SSC5D (1371 aa).

The N-terminal stretch at 1-16 (MRGLACLLAMLVGIQA) is a signal peptide. Residues 20–120 (LRLADGPHGC…HEEDAGVVCV (101 aa)) form the SRCR 1 domain. 3 disulfides stabilise this stretch: cysteine 45–cysteine 109, cysteine 58–cysteine 119, and cysteine 89–cysteine 99. The span at 143-154 (LSGELSPSSEEP) shows a compositional bias: low complexity. Positions 143–200 (LSGELSPSSEEPPITHAPQPAASSQNGPRKKNPRPPKQTKSTRAPVLTNGAPHQERLR) are disordered. 2 consecutive SRCR domains span residues 199–299 (LRLV…LVCT) and 305–405 (IRLA…AVCD). 6 cysteine pairs are disulfide-bonded: cysteine 224–cysteine 288, cysteine 237–cysteine 298, cysteine 268–cysteine 278, cysteine 330–cysteine 394, cysteine 343–cysteine 404, and cysteine 374–cysteine 384. N-linked (GlcNAc...) asparagine glycosylation is found at asparagine 377 and asparagine 422. The tract at residues 431-466 (TSVGQMPGPAGPWPPSASPTAPPEPGPEAGSPQLRL) is disordered. The span at 439–456 (PAGPWPPSASPTAPPEPG) shows a compositional bias: pro residues. The region spanning 464–565 (LRLVAGPSRC…HNEDVGVTCT (102 aa)) is the SRCR 4 domain. Intrachain disulfides connect cysteine 489–cysteine 554, cysteine 502–cysteine 564, and cysteine 534–cysteine 544. The segment at 592–756 (WLPGELTTKP…AGVPVPSGPF (165 aa)) is disordered. Polar residues predominate over residues 599 to 611 (TKPSASLTSSVPQ). The segment covering 622–633 (KSTKKWVTKNAR) has biased composition (basic residues). Positions 653-663 (TPTSLHPTART) are enriched in polar residues. Positions 665-676 (ELPKRLTTEAPH) are enriched in basic and acidic residues. Positions 698–740 (PVVSQSTQGPQEVTSEATTTENPQTSLEPSGENTEGSLESSQD) are enriched in polar residues. A compositionally biased stretch (low complexity) spans 741-755 (PATTPTAGVPVPSGP). The 101-residue stretch at 758–858 (VRLADGPNRC…HEEDVVLTCT (101 aa)) folds into the SRCR 5 domain. 3 disulfide bridges follow: cysteine 783–cysteine 847, cysteine 796–cysteine 857, and cysteine 827–cysteine 837. 2 disordered regions span residues 888 to 1270 (RPGH…PFGP) and 1351 to 1371 (STPV…RGDV). A compositionally biased stretch (polar residues) spans 894–912 (SWATTTNTEVPSPATQNLP). Composition is skewed to low complexity over residues 936-957 (KGTP…KSPG), 981-1004 (PTSA…RQTS), and 1018-1035 (GTSS…LPSP). 2 stretches are compositionally biased toward polar residues: residues 1039 to 1086 (ALST…TSEL) and 1102 to 1148 (SSDS…NPQQ). Residues asparagine 1044 and asparagine 1131 are each glycosylated (N-linked (GlcNAc...) asparagine). The span at 1149–1163 (PRSPHPATSPQPPTN) shows a compositional bias: pro residues. Polar residues predominate over residues 1164–1189 (THPSSTPATPTESLPSSRKTELSSPT). Low complexity predominate over residues 1218–1230 (ASESGPSSPSPAS). The span at 1244–1261 (RSQTLHSASDHLTQGPTP) shows a compositional bias: polar residues.

In terms of assembly, interacts with LGALS1 and laminin. In terms of processing, partially N- and O-glycosylated. Detected throughout the gastrointestinal and genitourinary tracts, in serosal salivary gland, the exocrine part of pancreas and testis, as well as in a few tubular structures in kidney. Not detected in lung and heart (at protein level). Strongly expressed in testis, kidney and pancreas, with lower levels detected in bone marrow, spleen, lung, liver, colon, stomach and skeletal muscle. Very low levels or no expression detected in thymus, esophagus, jejunum, ileum, duodenum, ovary, uterus, heart, trachea, brain, cerebellum and bladder.

It localises to the secreted. The protein localises to the cytoplasm. Its function is as follows. Binds to extracellular matrix proteins. Binds to pathogen-associated molecular patterns (PAMPs) present on the cell walls of Gram-positive and Gram-negative bacteria and fungi, behaving as a pattern recognition receptor (PRR). Induces bacterial and fungal aggregation and subsequent inhibition of PAMP-induced cytokine release. Does not possess intrinsic bactericidal activity. May play a role in the innate defense and homeostasis of certain epithelial surfaces. The chain is Soluble scavenger receptor cysteine-rich domain-containing protein SSC5D (Ssc5d) from Mus musculus (Mouse).